Here is a 201-residue protein sequence, read N- to C-terminus: Transcriptional regulator GfcR (201 aa).

This sequence belongs to the purine/pyrimidine phosphoribosyltransferase family. GfcR subfamily.

The chain is Transcriptional regulator GfcR from Methanobrevibacter smithii (strain ATCC 35061 / DSM 861 / OCM 144 / PS).